The primary structure comprises 152 residues: D-aminoacyl-tRNA deacylase (152 aa).

The short motif at 142–143 (GP) is the Gly-cisPro motif, important for rejection of L-amino acids element.

It belongs to the DTD family. As to quaternary structure, homodimer.

The protein localises to the cytoplasm. The catalysed reaction is glycyl-tRNA(Ala) + H2O = tRNA(Ala) + glycine + H(+). The enzyme catalyses a D-aminoacyl-tRNA + H2O = a tRNA + a D-alpha-amino acid + H(+). In terms of biological role, an aminoacyl-tRNA editing enzyme that deacylates mischarged D-aminoacyl-tRNAs. Also deacylates mischarged glycyl-tRNA(Ala), protecting cells against glycine mischarging by AlaRS. Acts via tRNA-based rather than protein-based catalysis; rejects L-amino acids rather than detecting D-amino acids in the active site. By recycling D-aminoacyl-tRNA to D-amino acids and free tRNA molecules, this enzyme counteracts the toxicity associated with the formation of D-aminoacyl-tRNA entities in vivo and helps enforce protein L-homochirality. The chain is D-aminoacyl-tRNA deacylase from Burkholderia multivorans (strain ATCC 17616 / 249).